The sequence spans 44 residues: Cytochrome b559 subunit beta (44 aa).

The chain crosses the membrane as a helical span at residues 19–35; that stretch reads WLSVHALGVPSVFFLGA. His-23 contributes to the heme binding site.

Belongs to the PsbE/PsbF family. In terms of assembly, heterodimer of an alpha subunit and a beta subunit. PSII is composed of 1 copy each of membrane proteins PsbA, PsbB, PsbC, PsbD, PsbE, PsbF, PsbH, PsbI, PsbJ, PsbK, PsbL, PsbM, PsbT, PsbX, PsbY, PsbZ, Psb30/Ycf12, peripheral proteins PsbO, CyanoQ (PsbQ), PsbU, PsbV and a large number of cofactors. It forms dimeric complexes. Heme b is required as a cofactor.

Its subcellular location is the cellular thylakoid membrane. This b-type cytochrome is tightly associated with the reaction center of photosystem II (PSII). PSII is a light-driven water:plastoquinone oxidoreductase that uses light energy to abstract electrons from H(2)O, generating O(2) and a proton gradient subsequently used for ATP formation. It consists of a core antenna complex that captures photons, and an electron transfer chain that converts photonic excitation into a charge separation. The polypeptide is Cytochrome b559 subunit beta (Synechococcus elongatus (strain ATCC 33912 / PCC 7942 / FACHB-805) (Anacystis nidulans R2)).